The following is a 412-amino-acid chain: MTEVNTQPEVNIGLVGHVDHGKTTLVQALSGSWTDQHSEEMKRGISIRLGYADATFRRCPGVDAPECYTVDEECEDGSESEPIRTVSFVDAPGHETLMATMLSGASIMDGAVLVVSATEDVPQAQTEEHLMALDLIGIENIVIAQNKVDLVDRDRAVDNYRQIQEFVEGTVAEDAPIVPVSAQQEVNMDLLIDAIESEIPTPDRDPGESARMYAARSFDINRPGATAAELKGGVVGGSLVSGELSVGDGLEIRPGREVDEEGQTEWRPLETTVRSLQAGSNDVESARPGGLLGVGTGLDPSLTKGDALAGQVAGEPGTLPPTRNEFEMQVDLLDRVIGSEEGDDGDVEDINTGEPLMLTVGTATTVGAVTSAREGECEVSLKRPVCAEKGAQIAINRRVGARWRLIGVGTLS.

A tr-type G domain is found at 7 to 203 (QPEVNIGLVG…AIESEIPTPD (197 aa)). The interval 16 to 23 (GHVDHGKT) is G1. Positions 19, 23, 44, and 46 each coordinate Mg(2+). 19-24 (DHGKTT) contributes to the GTP binding site. Residues 44 to 48 (GISIR) are G2. Residues 90 to 93 (DAPG) form a G3 region. Residues 146–149 (NKVD) and 181–183 (SAQ) each bind GTP. The G4 stretch occupies residues 146–149 (NKVD). Residues 181 to 183 (SAQ) are G5.

It belongs to the TRAFAC class translation factor GTPase superfamily. Classic translation factor GTPase family. EIF2G subfamily. Heterotrimer composed of an alpha, a beta and a gamma chain. The cofactor is Mg(2+).

The enzyme catalyses GTP + H2O = GDP + phosphate + H(+). Functionally, eIF-2 functions in the early steps of protein synthesis by forming a ternary complex with GTP and initiator tRNA. This Halorubrum lacusprofundi (strain ATCC 49239 / DSM 5036 / JCM 8891 / ACAM 34) protein is Translation initiation factor 2 subunit gamma.